The following is a 117-amino-acid chain: Large ribosomal subunit protein uL18 (117 aa).

Positions 1 to 17 (MNLSRNKARKVKQKRLR) are enriched in basic residues. Positions 1 to 23 (MNLSRNKARKVKQKRLRAKSELS) are disordered.

It belongs to the universal ribosomal protein uL18 family. In terms of assembly, part of the 50S ribosomal subunit; part of the 5S rRNA/L5/L18/L25 subcomplex. Contacts the 5S and 23S rRNAs.

This is one of the proteins that bind and probably mediate the attachment of the 5S RNA into the large ribosomal subunit, where it forms part of the central protuberance. In Mycoplasmopsis synoviae (strain 53) (Mycoplasma synoviae), this protein is Large ribosomal subunit protein uL18.